The primary structure comprises 465 residues: Ubiquitin carboxyl-terminal hydrolase UCH54 (465 aa).

A UCH catalytic domain is found at 11 to 333 (EWCLIESNPC…VRFNIIAVMK (323 aa)). The active-site Nucleophile is the Cys-145. The Proton donor role is filled by His-220. The tract at residues 244–293 (INADEQNKPNPNNNNNNKDNDNDNNNNNNNNNNNNNNNNNNNNNNNNNNI) is disordered. Low complexity predominate over residues 251–292 (KPNPNNNNNNKDNDNDNNNNNNNNNNNNNNNNNNNNNNNNNN). The ULD domain maps to 432-460 (NFYPFIMSSLNLMAKHKLLKDAYQKEKLK).

Belongs to the peptidase C12 family.

The enzyme catalyses Thiol-dependent hydrolysis of ester, thioester, amide, peptide and isopeptide bonds formed by the C-terminal Gly of ubiquitin (a 76-residue protein attached to proteins as an intracellular targeting signal).. Thiol protease that recognizes and hydrolyzes a peptide bond at the C-terminal glycine of either ubiquitin or NEDD8. The protein is Ubiquitin carboxyl-terminal hydrolase UCH54 of Plasmodium falciparum (isolate 3D7).